Reading from the N-terminus, the 334-residue chain is Glyceraldehyde-3-phosphate dehydrogenase (334 aa).

NAD(+) is bound by residues 11–12, D33, and S119; that span reads RI. D-glyceraldehyde 3-phosphate contacts are provided by residues 149 to 151 and T180; that span reads SCT. Catalysis depends on C150, which acts as the Nucleophile. Residue N181 coordinates NAD(+). D-glyceraldehyde 3-phosphate is bound by residues R197, 210–211, and R233; that span reads TG. N314 contacts NAD(+).

The protein belongs to the glyceraldehyde-3-phosphate dehydrogenase family. As to quaternary structure, homotetramer.

It is found in the cytoplasm. The catalysed reaction is D-glyceraldehyde 3-phosphate + phosphate + NAD(+) = (2R)-3-phospho-glyceroyl phosphate + NADH + H(+). It participates in carbohydrate degradation; glycolysis; pyruvate from D-glyceraldehyde 3-phosphate: step 1/5. Functionally, catalyzes the oxidative phosphorylation of glyceraldehyde 3-phosphate (G3P) to 1,3-bisphosphoglycerate (BPG) using the cofactor NAD. The first reaction step involves the formation of a hemiacetal intermediate between G3P and a cysteine residue, and this hemiacetal intermediate is then oxidized to a thioester, with concomitant reduction of NAD to NADH. The reduced NADH is then exchanged with the second NAD, and the thioester is attacked by a nucleophilic inorganic phosphate to produce BPG. The sequence is that of Glyceraldehyde-3-phosphate dehydrogenase (gap) from Clostridium acetobutylicum (strain ATCC 824 / DSM 792 / JCM 1419 / IAM 19013 / LMG 5710 / NBRC 13948 / NRRL B-527 / VKM B-1787 / 2291 / W).